We begin with the raw amino-acid sequence, 501 residues long: Glycerol kinase (501 aa).

Thr12 contributes to the ADP binding site. ATP-binding residues include Thr12, Thr13, and Ser14. Sn-glycerol 3-phosphate is bound at residue Thr12. Arg16 serves as a coordination point for ADP. Sn-glycerol 3-phosphate contacts are provided by Arg82, Glu83, Tyr135, and Asp244. Glycerol is bound by residues Arg82, Glu83, Tyr135, Asp244, and Gln245. 4 residues coordinate ADP: Thr266, Gly309, Gly409, and Asn413. Thr266, Gly309, and Gly409 together coordinate ATP.

It belongs to the FGGY kinase family.

It catalyses the reaction glycerol + ATP = sn-glycerol 3-phosphate + ADP + H(+). Its pathway is polyol metabolism; glycerol degradation via glycerol kinase pathway; sn-glycerol 3-phosphate from glycerol: step 1/1. Inhibited by fructose 1,6-bisphosphate (FBP). Functionally, key enzyme in the regulation of glycerol uptake and metabolism. Catalyzes the phosphorylation of glycerol to yield sn-glycerol 3-phosphate. This chain is Glycerol kinase, found in Coxiella burnetii (strain Dugway 5J108-111).